A 164-amino-acid chain; its full sequence is GTP-dependent dephospho-CoA kinase (164 aa).

Aspartate 40, valine 41, valine 42, aspartate 59, lysine 61, and glutamate 113 together coordinate GTP.

The protein belongs to the GTP-dependent DPCK family.

It carries out the reaction 3'-dephospho-CoA + GTP = GDP + CoA + H(+). It participates in cofactor biosynthesis; coenzyme A biosynthesis. Catalyzes the GTP-dependent phosphorylation of the 3'-hydroxyl group of dephosphocoenzyme A to form coenzyme A (CoA). This Sulfolobus acidocaldarius (strain ATCC 33909 / DSM 639 / JCM 8929 / NBRC 15157 / NCIMB 11770) protein is GTP-dependent dephospho-CoA kinase.